Reading from the N-terminus, the 298-residue chain is 3'-5' exonuclease crn-4 (298 aa).

One can recognise an Exonuclease domain in the interval Leu-12–Leu-192. 3 residues coordinate Mg(2+): Asp-15, Glu-17, and Asp-184. Zn(2+) contacts are provided by Cys-210, Cys-260, Cys-263, and Cys-270.

Homodimer (via C-terminus). Interacts with crn-5; interaction promotes the DNase activity of crn-4. Interacts with cps-6, crn-1 and cyn-13. It depends on Mg(2+) as a cofactor.

With respect to regulation, exonuclease activity is inhibited in vitro by pontacyl violet 6R (PV6R), p-chloromercuriphenyl sulfonate (PCMPS), 5,5'-dithiobis(2-nitrobenzoic acid) (DTNB), aurintricarboxylic acid (ATA), 2-morpholin-4-ylethanesulfonate (MES), 4-[(4,6-dichloro-1,3,5-triazin-2-yl)amino]-2-(3-hydroxy-6-oxoxanthen-9-yl)benzoic acid (DR396) and fmoc-d-Cha-OH (FDCO). Interaction with ssRNA is reduced in vitro by PV6R. In terms of biological role, possesses 3'-&gt;5' exoribonuclease activity in digestion of DNA and RNA. Cleaves nucleic acid substrates with efficiencies in the following order: single-stranded RNA (ssRNA) &gt; double-stranded DNA (dsDNA) &gt; single-stranded DNA (ssDNA). Involved in apoptotic DNA degradation. The protein is 3'-5' exonuclease crn-4 (crn-4) of Caenorhabditis elegans.